The primary structure comprises 164 residues: FMN reductase (NADH) RutF (164 aa).

The protein belongs to the non-flavoprotein flavin reductase family. RutF subfamily.

It catalyses the reaction FMNH2 + NAD(+) = FMN + NADH + 2 H(+). Catalyzes the reduction of FMN to FMNH2 which is used to reduce pyrimidine by RutA via the Rut pathway. The chain is FMN reductase (NADH) RutF from Klebsiella pneumoniae (strain 342).